We begin with the raw amino-acid sequence, 1052 residues long: Germline survival defective-1 (1052 aa).

The first 25 residues, 1 to 25 (MRCLISYLFHSFLIFLKFIRSDVTA), serve as a signal peptide directing secretion. 5 disordered regions span residues 41-320 (LMKS…DPKN), 478-543 (VNGI…QSVP), 667-689 (PSSQAVGDENDTDSDHESEEEFE), 933-965 (KQTLLSKKGDHRTRSDGEGSQQNGGTSSSNSYA), and 1033-1052 (SNNTGGVNGNSGGGNQNSNF). The span at 67–145 (ATATAAATTQ…SSTSSTSQQT (79 aa)) shows a compositional bias: low complexity. Positions 163–172 (TSNTANSQSG) are enriched in polar residues. Residues 178 to 190 (TNKDRPKEKEKNT) show a composition bias toward basic and acidic residues. Residues 244 to 279 (NAKSSGFLSNSSLSSAGQISASSAPPVSTTPTAIPI) are compositionally biased toward low complexity. Residues 305 to 320 (KRDEEPMPYKSTDPKN) are compositionally biased toward basic and acidic residues. The gld-4 binding stretch occupies residues 424 to 732 (QHPPGLPPLL…QIEKNDNLFS (309 aa)). The segment covering 480–514 (GISNNIPSDRQQLDSKPNTARGSSGNINQSNTTSP) has biased composition (polar residues). A compositionally biased stretch (acidic residues) spans 674–689 (DENDTDSDHESEEEFE). A gld-3 binding region spans residues 892–1052 (PIELPVNMQP…SGGGNQNSNF (161 aa)). Positions 950 to 963 (EGSQQNGGTSSSNS) are enriched in low complexity. Over residues 1038 to 1052 (GVNGNSGGGNQNSNF) the composition is skewed to gly residues.

As to quaternary structure, isoform C interacts (via C-terminus) with gld-3 isoform A (via C-terminus) in an RNA-independent manner. Isoform C interacts with gld-4. As to expression, expressed in the germline (at protein level). In the early embryo is expressed in all cells, then becomes gradually restricted to the germ cell lineage and enriches in P granules (at protein level). In adult hermaphrodites, is expressed in the mitotic region, accumulates during early stages of meiotic prophase I and is slightly less abundant in maturing oocytes (at protein level).

It is found in the cytoplasm. The protein resides in the cytoplasmic granule. Required maternally for germline survival by forming a maternal complex with gld-3. During hermaphrodite development forms a complex with gld-3 which promotes the sperm/oocyte switch freeing the translational repressor fbf to turn off sperm promoting factors. Required for proper oocyte differentiation and oogenic meiotic arrest. Stimulates the enzymatic activity of gld-4 and together they prevent gld-1 mRNA degradation. The polypeptide is Germline survival defective-1 (Caenorhabditis elegans).